The sequence spans 269 residues: ATP synthase subunit gamma, mitochondrial (269 aa).

As to quaternary structure, F-type ATP synthases have 2 components, the catalytic core F(1) and the membrane-embedded component F(0), linked together by a central stalk and a peripheral stalk. The central stalk, also called rotor shaft, is often seen as part of F(1). The peripheral stalk is seen as part of F(0). F(0) contains the membrane channel next to the rotor. F-type ATP synthases form dimers but each monomer functions independently in ATP generation. The dimer consists of 18 different polypeptides: ATP1 (subunit alpha, part of F(1), 3 molecules per monomer), ATP2 (subunit beta, part of F(1), 3 molecules per monomer), ATP3 (subunit gamma, part of the central stalk), ATP4 (subunit b, part of the peripheral stalk), ATP5/OSCP (subunit 5/OSCP, part of the peripheral stalk), ATP6 (subunit a, part of the peripheral stalk), ATP7 (subunit d, part of the peripheral stalk), ATP8 (subunit 8, part of the peripheral stalk), OLI1 (subunit c, part of the rotor, 10 molecules per monomer), ATP14 (subunit h, part of the peripheral stalk), ATP15 (subunit epsilon, part of the central stalk), ATP16 (subunit delta, part of the central stalk), ATP17 (subunit f, part of the peripheral stalk), ATP18 (subunit i/j, part of the peripheral stalk). Dimer-specific subunits are ATP19 (subunit k, at interface between monomers), ATP20 (subunit g, at interface between monomers), TIM11 (subunit e, at interface between monomers). Also contains subunit L.

The protein localises to the mitochondrion inner membrane. Mitochondrial membrane ATP synthase (F(1)F(0) ATP synthase or Complex V) produces ATP from ADP in the presence of a proton gradient across the membrane which is generated by electron transport complexes of the respiratory chain. F-type ATP synthases consist of two structural domains, F(1) - containing the extramembraneous catalytic core, and F(0) - containing the membrane proton channel, linked together by a central stalk and a peripheral stalk. During catalysis, ATP synthesis in the catalytic domain of F(1) is coupled via a rotary mechanism of the central stalk subunits to proton translocation. Part of the complex F(1) domain and the central stalk which is part of the complex rotary element. The gamma/ATP3 subunit protrudes into the catalytic domain formed of alpha/ATP1(3)beta/ATP2(3). Rotation of the central stalk against the surrounding alpha/ATP1(3)beta/ATP2(3) subunits leads to hydrolysis of ATP in three separate catalytic sites on the beta/ATP2 subunits. In Pichia angusta (Yeast), this protein is ATP synthase subunit gamma, mitochondrial.